A 378-amino-acid polypeptide reads, in one-letter code: Holliday junction branch migration complex subunit RuvB 1 (378 aa).

The segment covering 1–12 has biased composition (polar residues); sequence MAIISSRDTGQN. The interval 1 to 62 is disordered; that stretch reads MAIISSRDTG…PGEAQEESLR (62 aa). The segment at 13 to 222 is large ATPase domain (RuvB-L); it reads AEGPKRRQQK…FGHVQRLRFY (210 aa). Residues leucine 61, arginine 62, glycine 103, lysine 106, threonine 107, threonine 108, 169 to 171, arginine 212, tyrosine 222, and arginine 259 each bind ATP; that span reads EDF. Threonine 107 provides a ligand contact to Mg(2+). Residues 223–293 are small ATPAse domain (RuvB-S); that stretch reads EPHELVQIVL…VAAAALELFQ (71 aa). The tract at residues 296–378 is head domain (RuvB-H); sequence PMGLDWIDRK…EAQSPLPLWS (83 aa). Residues arginine 351 and arginine 356 each coordinate DNA.

This sequence belongs to the RuvB family. In terms of assembly, homohexamer. Forms an RuvA(8)-RuvB(12)-Holliday junction (HJ) complex. HJ DNA is sandwiched between 2 RuvA tetramers; dsDNA enters through RuvA and exits via RuvB. An RuvB hexamer assembles on each DNA strand where it exits the tetramer. Each RuvB hexamer is contacted by two RuvA subunits (via domain III) on 2 adjacent RuvB subunits; this complex drives branch migration. In the full resolvosome a probable DNA-RuvA(4)-RuvB(12)-RuvC(2) complex forms which resolves the HJ.

The protein localises to the cytoplasm. The enzyme catalyses ATP + H2O = ADP + phosphate + H(+). The RuvA-RuvB-RuvC complex processes Holliday junction (HJ) DNA during genetic recombination and DNA repair, while the RuvA-RuvB complex plays an important role in the rescue of blocked DNA replication forks via replication fork reversal (RFR). RuvA specifically binds to HJ cruciform DNA, conferring on it an open structure. The RuvB hexamer acts as an ATP-dependent pump, pulling dsDNA into and through the RuvAB complex. RuvB forms 2 homohexamers on either side of HJ DNA bound by 1 or 2 RuvA tetramers; 4 subunits per hexamer contact DNA at a time. Coordinated motions by a converter formed by DNA-disengaged RuvB subunits stimulates ATP hydrolysis and nucleotide exchange. Immobilization of the converter enables RuvB to convert the ATP-contained energy into a lever motion, pulling 2 nucleotides of DNA out of the RuvA tetramer per ATP hydrolyzed, thus driving DNA branch migration. The RuvB motors rotate together with the DNA substrate, which together with the progressing nucleotide cycle form the mechanistic basis for DNA recombination by continuous HJ branch migration. Branch migration allows RuvC to scan DNA until it finds its consensus sequence, where it cleaves and resolves cruciform DNA. This is Holliday junction branch migration complex subunit RuvB 1 from Synechococcus sp. (strain JA-3-3Ab) (Cyanobacteria bacterium Yellowstone A-Prime).